A 369-amino-acid chain; its full sequence is Phosphoribosylformylglycinamidine cyclo-ligase (369 aa).

The segment at 1–22 (MSKRDTSQPKTGQPKTSKRRNG) is disordered.

Belongs to the AIR synthase family.

It is found in the cytoplasm. It carries out the reaction 2-formamido-N(1)-(5-O-phospho-beta-D-ribosyl)acetamidine + ATP = 5-amino-1-(5-phospho-beta-D-ribosyl)imidazole + ADP + phosphate + H(+). It participates in purine metabolism; IMP biosynthesis via de novo pathway; 5-amino-1-(5-phospho-D-ribosyl)imidazole from N(2)-formyl-N(1)-(5-phospho-D-ribosyl)glycinamide: step 2/2. The chain is Phosphoribosylformylglycinamidine cyclo-ligase from Mesorhizobium japonicum (strain LMG 29417 / CECT 9101 / MAFF 303099) (Mesorhizobium loti (strain MAFF 303099)).